A 677-amino-acid polypeptide reads, in one-letter code: Methionine--tRNA ligase (677 aa).

Positions 15–25 (PYANGSIHLGH) match the 'HIGH' region motif. Residues C146, C149, C159, and C162 each coordinate Zn(2+). Residues 333 to 337 (KMSKS) carry the 'KMSKS' region motif. K336 is an ATP binding site. The region spanning 575 to 677 (DFAKVDLRVA…AGAKPGHQVK (103 aa)) is the tRNA-binding domain.

The protein belongs to the class-I aminoacyl-tRNA synthetase family. MetG type 1 subfamily. In terms of assembly, homodimer. Requires Zn(2+) as cofactor.

The protein localises to the cytoplasm. The enzyme catalyses tRNA(Met) + L-methionine + ATP = L-methionyl-tRNA(Met) + AMP + diphosphate. Its function is as follows. Is required not only for elongation of protein synthesis but also for the initiation of all mRNA translation through initiator tRNA(fMet) aminoacylation. The chain is Methionine--tRNA ligase from Escherichia coli O6:K15:H31 (strain 536 / UPEC).